Here is a 227-residue protein sequence, read N- to C-terminus: Uracil-DNA glycosylase (227 aa).

Aspartate 64 acts as the Proton acceptor in catalysis.

The protein belongs to the uracil-DNA glycosylase (UDG) superfamily. UNG family.

Its subcellular location is the cytoplasm. The catalysed reaction is Hydrolyzes single-stranded DNA or mismatched double-stranded DNA and polynucleotides, releasing free uracil.. In terms of biological role, excises uracil residues from the DNA which can arise as a result of misincorporation of dUMP residues by DNA polymerase or due to deamination of cytosine. This Erwinia tasmaniensis (strain DSM 17950 / CFBP 7177 / CIP 109463 / NCPPB 4357 / Et1/99) protein is Uracil-DNA glycosylase.